Reading from the N-terminus, the 403-residue chain is Large ribosomal subunit protein uL3 (403 aa).

A disordered region spans residues 1 to 37 (MSHRKFSAPRHGSLGFLPRKRSSRHRGKVKSFPKDDP). S13 carries the post-translational modification Phosphoserine. Residues 18–31 (PRKRSSRHRGKVKS) show a composition bias toward basic residues. Residue K39 forms a Glycyl lysine isopeptide (Lys-Gly) (interchain with G-Cter in SUMO2) linkage. K136 carries the post-translational modification N6-acetyllysine. Glycyl lysine isopeptide (Lys-Gly) (interchain with G-Cter in SUMO2) cross-links involve residues K224 and K226. The residue at position 245 (H245) is a Tele-methylhistidine. An N6-acetyllysine; alternate mark is found at K286 and K294. A Glycyl lysine isopeptide (Lys-Gly) (interchain with G-Cter in SUMO2); alternate cross-link involves residue K286. K294 participates in a covalent cross-link: Glycyl lysine isopeptide (Lys-Gly) (interchain with G-Cter in SUMO1); alternate. S304 bears the Phosphoserine mark. Position 366 is an N6-acetyllysine; alternate (K366). Residue K366 forms a Glycyl lysine isopeptide (Lys-Gly) (interchain with G-Cter in SUMO2); alternate linkage. K373 carries the post-translational modification N6-acetyllysine. Glycyl lysine isopeptide (Lys-Gly) (interchain with G-Cter in SUMO2) cross-links involve residues K386, K393, and K399.

The protein belongs to the universal ribosomal protein uL3 family. In terms of assembly, component of the large ribosomal subunit. Interacts with DHX33. Constitutively monomethylated at His-245 by METTL18. Methylation at His-245 regulates translation elongation by slowing ribosome traversal on tyrosine codons: slower elongation provides enough time for proper folding of synthesized proteins and prevents cellular aggregation of tyrosine-rich proteins. It is not required for incorporation of RPL3 into ribosomes.

The protein resides in the nucleus. The protein localises to the nucleolus. Its subcellular location is the cytoplasm. In terms of biological role, component of the large ribosomal subunit. The ribosome is a large ribonucleoprotein complex responsible for the synthesis of proteins in the cell. The chain is Large ribosomal subunit protein uL3 (Rpl3) from Rattus norvegicus (Rat).